Here is a 483-residue protein sequence, read N- to C-terminus: GTPase Der (483 aa).

EngA-type G domains lie at 3–167 (FTLA…GEER) and 212–387 (LRIA…EIWN). Residues 9–16 (GRPNVGKS), 56–60 (DTAGL), 119–122 (NKAE), 218–225 (GRPNAGKS), 265–269 (DTAGM), and 330–333 (NKWD) contribute to the GTP site. The 85-residue stretch at 388–472 (RRISTGRLNR…PIRLSLRTSD (85 aa)) folds into the KH-like domain.

Belongs to the TRAFAC class TrmE-Era-EngA-EngB-Septin-like GTPase superfamily. EngA (Der) GTPase family. As to quaternary structure, associates with the 50S ribosomal subunit.

GTPase that plays an essential role in the late steps of ribosome biogenesis. This chain is GTPase Der, found in Brucella abortus (strain 2308).